The sequence spans 21 residues: Venom peptide Ocy4 (21 aa).

In terms of tissue distribution, expressed by the venom gland.

It localises to the secreted. This is Venom peptide Ocy4 from Opisthacanthus cayaporum (South American scorpion).